Here is a 237-residue protein sequence, read N- to C-terminus: ATP synthase subunit a (237 aa).

4 consecutive transmembrane segments (helical) span residues L17 to A37, L78 to L98, I178 to I198, and M201 to F221.

The protein belongs to the ATPase A chain family. F-type ATPases have 2 components, CF(1) - the catalytic core - and CF(0) - the membrane proton channel. CF(1) has five subunits: alpha(3), beta(3), gamma(1), delta(1), epsilon(1). CF(0) has three main subunits: a(1), b(2) and c(9-12). The alpha and beta chains form an alternating ring which encloses part of the gamma chain. CF(1) is attached to CF(0) by a central stalk formed by the gamma and epsilon chains, while a peripheral stalk is formed by the delta and b chains.

The protein resides in the cell membrane. Functionally, key component of the proton channel; it plays a direct role in the translocation of protons across the membrane. The sequence is that of ATP synthase subunit a from Bacillus caldotenax.